We begin with the raw amino-acid sequence, 395 residues long: ATP phosphoribosyltransferase regulatory subunit (395 aa).

It belongs to the class-II aminoacyl-tRNA synthetase family. HisZ subfamily. In terms of assembly, heteromultimer composed of HisG and HisZ subunits.

The protein localises to the cytoplasm. Its pathway is amino-acid biosynthesis; L-histidine biosynthesis; L-histidine from 5-phospho-alpha-D-ribose 1-diphosphate: step 1/9. Required for the first step of histidine biosynthesis. May allow the feedback regulation of ATP phosphoribosyltransferase activity by histidine. This is ATP phosphoribosyltransferase regulatory subunit from Pseudomonas syringae pv. syringae (strain B728a).